The following is a 360-amino-acid chain: Peptide chain release factor 1 (360 aa).

Gln-235 is modified (N5-methylglutamine). The segment covering 284–295 (ERQEQAQADTRR) has biased composition (basic and acidic residues). The segment at 284–309 (ERQEQAQADTRRNLLGSGDRSDKIRT) is disordered.

The protein belongs to the prokaryotic/mitochondrial release factor family. Methylated by PrmC. Methylation increases the termination efficiency of RF1.

It localises to the cytoplasm. In terms of biological role, peptide chain release factor 1 directs the termination of translation in response to the peptide chain termination codons UAG and UAA. This Pasteurella multocida (strain Pm70) protein is Peptide chain release factor 1 (prfA).